The primary structure comprises 632 residues: Tetratricopeptide repeat protein 39B (632 aa).

TPR repeat units follow at residues 343 to 376 (SLVL…QEEW), 535 to 568 (CLVK…EKLL), and 576 to 609 (PFTL…YKDY).

The protein belongs to the TTC39 family.

Its function is as follows. Regulates high density lipoprotein (HDL) cholesterol metabolism by promoting the ubiquitination and degradation of the oxysterols receptors LXR (NR1H2 and NR1H3). The chain is Tetratricopeptide repeat protein 39B (TTC39B) from Macaca fascicularis (Crab-eating macaque).